Here is a 366-residue protein sequence, read N- to C-terminus: Transcription initiation factor IIA subunit 1 (366 aa).

Disordered stretches follow at residues 56–82 (LSPD…AANA), 133–162 (EVNS…SSGQ), and 257–317 (QLDG…DSAE). Low complexity predominate over residues 146 to 162 (SAASMMQKQQQAASSGQ). The span at 264–317 (SSDEDESEESDDNIDNDDDDDLDKDDDEDAEHEDAAEEEPLNSEDDVTDEDSAE) shows a compositional bias: acidic residues. S265 and S306 each carry phosphoserine; by TAF1.

Belongs to the TFIIA subunit 1 family. In terms of assembly, belongs to the TFIID complex which is composed of TATA binding protein (Tbp) and a number of TBP-associated factors (Tafs). TFIIA is a heterodimer of a unprocessed large subunit 1 and a small subunit gamma. It was originally believed to be a heterotrimer of an alpha (p30), a beta (p20) and a gamma subunit (p14). Interacts with Tbp. Taf4 interacts with TFIIA-L when TFIIA-L is in complex with Tbp. The precursor form (48 kDa) is cleaved to give rise to the alpha (30 kDa) and beta (20 kDa) subunits.

The protein localises to the nucleus. Functionally, TFIIA is a component of the transcription machinery of RNA polymerase II and plays an important role in transcriptional activation. TFIIA in a complex with TBP mediates transcriptional activity. The protein is Transcription initiation factor IIA subunit 1 (TfIIA-L) of Drosophila melanogaster (Fruit fly).